The following is a 503-amino-acid chain: T-complex protein 11 homolog (503 aa).

A compositionally biased stretch (basic and acidic residues) spans 1–22 (MPDVKESVPPKYPGDSEGRSCK). Disordered regions lie at residues 1 to 42 (MPDV…PPPF) and 254 to 285 (DLTM…NPEP). The span at 263–285 (PDTSDSSSVAGPSPNEAANNPEP) shows a compositional bias: low complexity. A helical transmembrane segment spans residues 330-349 (LTVMASVLLVASSFSGSVLF).

The protein belongs to the TCP11 family. In terms of assembly, found in a complex at least composed of MROH2B, PRKACA isoform 2 and TCP11. Interacts with MROH2B. Interacts with PRKACA isoform 2. Isoform 2 and isoform 3 interact with ODF1 (via leucine zipper motif). Constitutively phosphorylated on serine, threonine and tyrosine residues within the head and tail regions of noncapacitated spermatozoa. Phosphorylation on tyrosine residues increases upon sperm capacitation within the acrosomal region in a protein kinase A (PKA)-dependent signaling pathway. As to expression, isoform 2 and isoform 3 are expressed in sperm. Isoform 1 is not detected in sperm (at protein level). Testis-specific. Isoform 1, isoform 2 and isoform 3 are expressed in sperm.

The protein resides in the membrane. Its subcellular location is the cell projection. It localises to the cilium. The protein localises to the flagellum. It is found in the cytoplasmic vesicle. The protein resides in the secretory vesicle. Its subcellular location is the acrosome. Plays a role in the process of sperm capacitation and acrosome reactions. Probable receptor for the putative fertilization-promoting peptide (FPP) at the sperm membrane that may modulate the activity of the adenylyl cyclase cAMP pathway. The protein is T-complex protein 11 homolog (TCP11) of Homo sapiens (Human).